A 75-amino-acid polypeptide reads, in one-letter code: MNRTKRSSRRRLPPIRSGEIIDYKNISLLRRFMSEQGKILSRRINRLTSKQQRLMTVAIKRARILALSPFLNNES.

Belongs to the bacterial ribosomal protein bS18 family. In terms of assembly, part of the 30S ribosomal subunit.

It localises to the plastid. It is found in the chloroplast. The chain is Small ribosomal subunit protein bS18c from Angiopteris evecta (Mule's foot fern).